We begin with the raw amino-acid sequence, 251 residues long: Vitamin B12 import ATP-binding protein BtuD (251 aa).

The ABC transporter domain occupies 2–236 (IRVNSLQVDS…EVLQSVFGTS (235 aa)). Residue 30–37 (GPNGCGKS) participates in ATP binding.

Belongs to the ABC transporter superfamily. Vitamin B12 importer (TC 3.A.1.13.1) family. As to quaternary structure, the complex is composed of two ATP-binding proteins (BtuD), two transmembrane proteins (BtuC) and a solute-binding protein (BtuF).

The protein localises to the cell inner membrane. It carries out the reaction an R-cob(III)alamin(out) + ATP + H2O = an R-cob(III)alamin(in) + ADP + phosphate + H(+). Functionally, part of the ABC transporter complex BtuCDF involved in vitamin B12 import. Responsible for energy coupling to the transport system. The polypeptide is Vitamin B12 import ATP-binding protein BtuD (Vibrio cholerae serotype O1 (strain ATCC 39541 / Classical Ogawa 395 / O395)).